Reading from the N-terminus, the 285-residue chain is Protein pxr1 (285 aa).

The span at 1–11 (MGLAAPRKKIK) shows a compositional bias: basic residues. Residues 1–23 (MGLAAPRKKIKISHDPNNTNWSR) are disordered. Residues 25 to 79 (TSGFGHKILSSQGWTPGSFLGARNAAHAEMFTAASASHIKVVLKDDTLGLGARPK) enclose the G-patch domain. Residues 144 to 263 (TPIVTEEPQG…MGRHVFRGRH (120 aa)) form a disordered region. Residues 152-163 (QGIHKDKQEDKL) show a composition bias toward basic and acidic residues. Residues 190–208 (KKKKSKSKNHREKKDRKRK) show a composition bias toward basic residues. The segment covering 224-234 (RSTEKKSKATR) has biased composition (basic and acidic residues). Positions 254-263 (MGRHVFRGRH) are enriched in basic residues.

The protein belongs to the PINX1 family.

It localises to the nucleus. The protein resides in the nucleolus. In terms of biological role, involved in rRNA-processing at A0, A1 and A2 sites and negatively regulates telomerase. This chain is Protein pxr1 (pxr1), found in Aspergillus niger (strain ATCC MYA-4892 / CBS 513.88 / FGSC A1513).